Consider the following 138-residue polypeptide: Large ribosomal subunit protein bL19 (138 aa).

This sequence belongs to the bacterial ribosomal protein bL19 family.

Its function is as follows. This protein is located at the 30S-50S ribosomal subunit interface and may play a role in the structure and function of the aminoacyl-tRNA binding site. The chain is Large ribosomal subunit protein bL19 from Rickettsia typhi (strain ATCC VR-144 / Wilmington).